The primary structure comprises 368 residues: 2-aminoethylphosphonate--pyruvate transaminase (368 aa).

K192 bears the N6-(pyridoxal phosphate)lysine mark.

It belongs to the class-V pyridoxal-phosphate-dependent aminotransferase family. PhnW subfamily. Homodimer. Requires pyridoxal 5'-phosphate as cofactor.

The enzyme catalyses (2-aminoethyl)phosphonate + pyruvate = phosphonoacetaldehyde + L-alanine. Its function is as follows. Involved in phosphonate degradation. In Pseudomonas putida (strain ATCC 700007 / DSM 6899 / JCM 31910 / BCRC 17059 / LMG 24140 / F1), this protein is 2-aminoethylphosphonate--pyruvate transaminase.